Consider the following 677-residue polypeptide: Platelet glycoprotein Ib alpha chain (677 aa).

Positions 1–16 (MHLLLWLLLLARLCRP) are cleaved as a signal peptide. Residues 17–47 (EFICEVSKVTSQVEVNCDNKGLKALPPGLPG) form the LRRNT domain. Over 17–564 (EFICEVSKVT…NPDLCCLLPL (548 aa)) the chain is Extracellular. C20 and C33 form a disulfide bridge. LRR repeat units follow at residues 72–93 (RLAQLHLRQSQLTQLQVDGMLP), 94–115 (RLETLDVSHNRLKSLPSLGRAL), 117–138 (ALTTLDASFNELVALSPGTLDG), 141–162 (HLHELYLRGNKLKTLPPRLLAP), 165–186 (QLRKLNLADNRLTELPPGFLEG), and 189–210 (ELDTLYLQGNWLRTVPKGFFGD). One can recognise an LRRCT domain in the interval 221 to 282 (NPWSCDCEIL…HTYQGKDCPS (62 aa)). 2 disulfide bridges follow: C225/C264 and C227/C280. 2 positions are modified to sulfotyrosine: Y291 and Y294. O-linked (GalNAc...) threonine glycans are attached at residues T309, T319, T323, T324, T346, T354, T368, T372, T376, T377, and T399. The interval 359-499 (TLGPIMPTTT…EPTTTPTSPT (141 aa)) is disordered. Low complexity-rich tracts occupy residues 362-385 (PIMPTTTPEPTTPPTTLEPTTTPT), 393-403 (PTTLEPTTTPI), 411-421 (PTTLEPTTTPI), and 427-470 (TPST…TPTI). The span at 471–485 (PELPTPPTTPEPTMP) shows a compositional bias: pro residues. A compositionally biased stretch (low complexity) spans 486-499 (PTTLEPTTTPTSPT). The O-linked (GalNAc...) threonine glycan is linked to T487. S497 is a glycosylation site (O-linked (GalNAc...) serine). A glycan (O-linked (GalNAc...) threonine) is linked at T500. S523 is a glycosylation site (O-linked (GalNAc...) serine). Residues 565–585 (GFYILGLLWLLFASVVLILLL) form a helical membrane-spanning segment. Residues 586–677 (TWAQHVKPQA…VGVRYSSHSL (92 aa)) are Cytoplasmic-facing. A phosphoserine mark is found at S654 and S657.

Two GP-Ib beta are disulfide-linked to one GP-Ib alpha. GP-IX is complexed with the GP-Ib heterodimer via a non covalent linkage. Interacts with FLNB. Interacts with FLNA (via filamin repeats 4, 9, 12, 17, 19, 21, and 23). Post-translationally, O-glycosylated. In terms of processing, glycocalicin is the product of a proteolytic cleavage/shedding, catalyzed by ADAM17, which releases most of the extracellular domain. Binding sites for vWF and thrombin are in this part of the protein.

It is found in the membrane. Its function is as follows. GP-Ib, a surface membrane protein of platelets, participates in the formation of platelet plugs by binding to the A1 domain of vWF, which is already bound to the subendothelium. The chain is Platelet glycoprotein Ib alpha chain (GP1BA) from Canis lupus familiaris (Dog).